Reading from the N-terminus, the 96-residue chain is Large ribosomal subunit protein uL23 (96 aa).

The protein belongs to the universal ribosomal protein uL23 family. In terms of assembly, part of the 50S ribosomal subunit. Contacts protein L29, and trigger factor when it is bound to the ribosome.

In terms of biological role, one of the early assembly proteins it binds 23S rRNA. One of the proteins that surrounds the polypeptide exit tunnel on the outside of the ribosome. Forms the main docking site for trigger factor binding to the ribosome. The sequence is that of Large ribosomal subunit protein uL23 from Oleidesulfovibrio alaskensis (strain ATCC BAA-1058 / DSM 17464 / G20) (Desulfovibrio alaskensis).